A 635-amino-acid polypeptide reads, in one-letter code: tRNA uridine 5-carboxymethylaminomethyl modification enzyme MnmG (635 aa).

Residue 19 to 24 coordinates FAD; the sequence is GAGHAG. Residue 280-294 coordinates NAD(+); that stretch reads GPRYCPSIEDKIVRF.

This sequence belongs to the MnmG family. Homodimer. Heterotetramer of two MnmE and two MnmG subunits. FAD serves as cofactor.

It is found in the cytoplasm. Functionally, NAD-binding protein involved in the addition of a carboxymethylaminomethyl (cmnm) group at the wobble position (U34) of certain tRNAs, forming tRNA-cmnm(5)s(2)U34. The sequence is that of tRNA uridine 5-carboxymethylaminomethyl modification enzyme MnmG from Synechocystis sp. (strain ATCC 27184 / PCC 6803 / Kazusa).